We begin with the raw amino-acid sequence, 585 residues long: A-type ATP synthase subunit A (585 aa).

ATP is bound at residue 231–238 (GPFGSGKT).

Belongs to the ATPase alpha/beta chains family. In terms of assembly, has multiple subunits with at least A(3), B(3), C, D, E, F, H, I and proteolipid K(x).

The protein localises to the cell membrane. The enzyme catalyses ATP + H2O + 4 H(+)(in) = ADP + phosphate + 5 H(+)(out). Functionally, component of the A-type ATP synthase that produces ATP from ADP in the presence of a proton gradient across the membrane. The A chain is the catalytic subunit. This chain is A-type ATP synthase subunit A, found in Thermococcus sibiricus (strain DSM 12597 / MM 739).